The chain runs to 350 residues: Biotin synthase (350 aa).

Residues 38-256 (NYVQVSTLLS…IAVARIMMPT (219 aa)) enclose the Radical SAM core domain. [4Fe-4S] cluster-binding residues include Cys-53, Cys-57, and Cys-60. The [2Fe-2S] cluster site is built by Cys-97, Cys-128, Cys-188, and Arg-260.

The protein belongs to the radical SAM superfamily. Biotin synthase family. In terms of assembly, homodimer. It depends on [4Fe-4S] cluster as a cofactor. [2Fe-2S] cluster is required as a cofactor.

The catalysed reaction is (4R,5S)-dethiobiotin + (sulfur carrier)-SH + 2 reduced [2Fe-2S]-[ferredoxin] + 2 S-adenosyl-L-methionine = (sulfur carrier)-H + biotin + 2 5'-deoxyadenosine + 2 L-methionine + 2 oxidized [2Fe-2S]-[ferredoxin]. It participates in cofactor biosynthesis; biotin biosynthesis; biotin from 7,8-diaminononanoate: step 2/2. Functionally, catalyzes the conversion of dethiobiotin (DTB) to biotin by the insertion of a sulfur atom into dethiobiotin via a radical-based mechanism. This Vibrio vulnificus (strain CMCP6) protein is Biotin synthase.